The chain runs to 263 residues: Acyl-[acyl-carrier-protein]--UDP-N-acetylglucosamine O-acyltransferase (263 aa).

This sequence belongs to the transferase hexapeptide repeat family. LpxA subfamily. In terms of assembly, homotrimer.

It is found in the cytoplasm. The catalysed reaction is a (3R)-hydroxyacyl-[ACP] + UDP-N-acetyl-alpha-D-glucosamine = a UDP-3-O-[(3R)-3-hydroxyacyl]-N-acetyl-alpha-D-glucosamine + holo-[ACP]. Its pathway is glycolipid biosynthesis; lipid IV(A) biosynthesis; lipid IV(A) from (3R)-3-hydroxytetradecanoyl-[acyl-carrier-protein] and UDP-N-acetyl-alpha-D-glucosamine: step 1/6. In terms of biological role, involved in the biosynthesis of lipid A, a phosphorylated glycolipid that anchors the lipopolysaccharide to the outer membrane of the cell. This Xanthomonas axonopodis pv. citri (strain 306) protein is Acyl-[acyl-carrier-protein]--UDP-N-acetylglucosamine O-acyltransferase.